The primary structure comprises 276 residues: Short-chain dehydrogenase/reductase ATR10 (276 aa).

Positions 29, 51, 78, and 105 each coordinate NADP(+). Ser-161 functions as the Proton donor in the catalytic mechanism. Lys-185 and Thr-214 together coordinate NADP(+). The active-site Lowers pKa of active site Tyr is Lys-185.

Belongs to the short-chain dehydrogenases/reductases (SDR) family.

Its pathway is mycotoxin biosynthesis. In terms of biological role, short-chain dehydrogenase/reductase; part of the core atranone cluster (CAC) which products are predicted to catalyze most or all steps of mycotoxin atranone synthesis, starting from geranylgeranyl pyrophosphate (GGPP). The initial cyclization of GGPP to dolabellane is probably performed by the terpene cyclase ATR13. The Baeyer-Villiger oxidation near the end of the atranone synthesis, which converts atranones D and E to atranones F and G is predicted to be catalyzed by the monooxygenase ATR8. Of the CAC's other predicted gene products, the reducing PKS ATR6 might synthesize a polyketide chain. This polyketide is probably transferred onto the atranone backbone by the polyketide transferase ATR5. Other predicted CAC products include 4 oxygenases (ATR2, ATR3, ATR4, and ATR14), 3 short-chain reductases (ATR7, ATR9, and ATR10), and a methyltransferase (ATR12). These may all be involved in the various steps of atranone biosynthesis, although their specific roles must await experimental determination. In Stachybotrys chlorohalonatus (strain IBT 40285), this protein is Short-chain dehydrogenase/reductase ATR10.